The sequence spans 313 residues: WD repeat-containing protein 82 (313 aa).

WD repeat units follow at residues 19 to 58 (ENSD…PKRT), 105 to 144 (GHSK…CQGL), 146 to 184 (HLQG…KGPF), 192 to 231 (DRTC…VMHT), 236 to 276 (NNSK…KVAV), and 280 to 313 (KHTG…TIDD).

This sequence belongs to the WD repeat SWD2 family. In terms of assembly, component of the SET1/COMPASS complex. Component of the PNUTS-PP1 phosphatase complex.

It localises to the nucleus. It is found in the chromosome. Its subcellular location is the cytoplasm. Functionally, regulatory component of the SET1/COMPASS complex implicated in the tethering of this complex to transcriptional start sites of active genes. Facilitates histone H3 'Lys-4' methylation (H3K4me) via recruitment of the SETD1A or SETD1B to the 'Ser-5' phosphorylated C-terminal domain (CTD) of RNA polymerase II large subunit (POLR2A). Component of the PNUTS-PP1 protein phosphatase complex, a protein phosphatase 1 (PP1) complex that promotes RNA polymerase II transcription pause-release, allowing transcription elongation. In Xenopus tropicalis (Western clawed frog), this protein is WD repeat-containing protein 82 (wdr82).